Consider the following 162-residue polypeptide: Disulfide bond formation protein B (162 aa).

Residues 1–8 (MTPLFRKA) are Cytoplasmic-facing. Residues 9–25 (VWLLFAVSVCAFAGSLA) traverse the membrane as a helical segment. Residues 26–43 (AQYVLGMEPCVLCISQRL) are Periplasmic-facing. Cys35 and Cys38 are oxidised to a cystine. The chain crosses the membrane as a helical span at residues 44 to 60 (CVLATALCTAIVLMCRP). Over 61-67 (RRRAGGL) the chain is Cytoplasmic. A helical transmembrane segment spans residues 68–85 (FGAVFISIPAVTGISVAA). Over 86 to 141 (YQLWLQSLPPGTAPSCGAPWTFRLKGWSLFDWFEPVVRGFGNCAEPDYLLGVALPV) the chain is Periplasmic. Cysteines 101 and 128 form a disulfide. The helical transmembrane segment at 142–160 (WSAAYFLAVVLTVWWAWAR) threads the bilayer. Residues 161 to 162 (AK) lie on the Cytoplasmic side of the membrane.

It belongs to the DsbB family.

It localises to the cell inner membrane. In terms of biological role, required for disulfide bond formation in some periplasmic proteins. Acts by oxidizing the DsbA protein. The protein is Disulfide bond formation protein B of Neisseria meningitidis serogroup C / serotype 2a (strain ATCC 700532 / DSM 15464 / FAM18).